The chain runs to 186 residues: ATP synthase subunit b (186 aa).

Residues 5 to 25 (LILNLLVLLAPAAVFAAGGGH) form a helical membrane-spanning segment.

The protein belongs to the ATPase B chain family. In terms of assembly, F-type ATPases have 2 components, F(1) - the catalytic core - and F(0) - the membrane proton channel. F(1) has five subunits: alpha(3), beta(3), gamma(1), delta(1), epsilon(1). F(0) has three main subunits: a(1), b(2) and c(10-14). The alpha and beta chains form an alternating ring which encloses part of the gamma chain. F(1) is attached to F(0) by a central stalk formed by the gamma and epsilon chains, while a peripheral stalk is formed by the delta and b chains.

The protein resides in the cell inner membrane. In terms of biological role, f(1)F(0) ATP synthase produces ATP from ADP in the presence of a proton or sodium gradient. F-type ATPases consist of two structural domains, F(1) containing the extramembraneous catalytic core and F(0) containing the membrane proton channel, linked together by a central stalk and a peripheral stalk. During catalysis, ATP synthesis in the catalytic domain of F(1) is coupled via a rotary mechanism of the central stalk subunits to proton translocation. Component of the F(0) channel, it forms part of the peripheral stalk, linking F(1) to F(0). The sequence is that of ATP synthase subunit b from Bdellovibrio bacteriovorus (strain ATCC 15356 / DSM 50701 / NCIMB 9529 / HD100).